A 376-amino-acid polypeptide reads, in one-letter code: Cyclic GMP-AMP synthase-like receptor 1 (376 aa).

Glu-77 and Asp-79 together coordinate Mg(2+).

Belongs to the mab-21 family. Mg(2+) serves as cofactor. Requires Mn(2+) as cofactor.

It carries out the reaction UTP + ATP = 3',3'-cUAMP + 2 diphosphate. Its function is as follows. Nucleotidyltransferase that catalyzes the formation of cyclic UMP-AMP (3',3'-cUAMP) from ATP and UTP and plays a key role in innate immunity. Acts as a key sensor of double-stranded RNA (dsRNA), the presence of dsRNA in the cytoplasm being a danger signal that triggers the immune responses. Directly binds dsRNA, activating the nucleotidyltransferase activity, leading to synthesis of 3',3'-cUAMP, a second messenger that binds to and activates Sting, thereby triggering the immune response via activation of the NF-kappa-B transcription factor. The sequence is that of Cyclic GMP-AMP synthase-like receptor 1 from Stylophora pistillata (Smooth cauliflower coral).